The following is a 542-amino-acid chain: CTP synthase (542 aa).

Positions 1 to 265 (MARYVFITGG…DDEVLAAFGI (265 aa)) are amidoligase domain. Ser13 provides a ligand contact to CTP. Ser13 contributes to the UTP binding site. ATP contacts are provided by residues 14–19 (SLGKGI) and Asp71. Mg(2+) contacts are provided by Asp71 and Glu139. Residues 146 to 148 (DIE), 186 to 191 (KTKPTQ), and Lys222 contribute to the CTP site. Residues 186-191 (KTKPTQ) and Lys222 each bind UTP. The 251-residue stretch at 291–541 (TIAIVGKYTG…IEAATEQSRL (251 aa)) folds into the Glutamine amidotransferase type-1 domain. Gly353 is a binding site for L-glutamine. The Nucleophile; for glutamine hydrolysis role is filled by Cys380. Residues 381 to 384 (FGMQ), Glu404, and Arg469 contribute to the L-glutamine site. Active-site residues include His514 and Glu516.

The protein belongs to the CTP synthase family. In terms of assembly, homotetramer.

The enzyme catalyses UTP + L-glutamine + ATP + H2O = CTP + L-glutamate + ADP + phosphate + 2 H(+). The catalysed reaction is L-glutamine + H2O = L-glutamate + NH4(+). It carries out the reaction UTP + NH4(+) + ATP = CTP + ADP + phosphate + 2 H(+). The protein operates within pyrimidine metabolism; CTP biosynthesis via de novo pathway; CTP from UDP: step 2/2. With respect to regulation, allosterically activated by GTP, when glutamine is the substrate; GTP has no effect on the reaction when ammonia is the substrate. The allosteric effector GTP functions by stabilizing the protein conformation that binds the tetrahedral intermediate(s) formed during glutamine hydrolysis. Inhibited by the product CTP, via allosteric rather than competitive inhibition. Functionally, catalyzes the ATP-dependent amination of UTP to CTP with either L-glutamine or ammonia as the source of nitrogen. Regulates intracellular CTP levels through interactions with the four ribonucleotide triphosphates. The chain is CTP synthase from Rhizobium leguminosarum bv. trifolii (strain WSM2304).